Here is a 601-residue protein sequence, read N- to C-terminus: Proline--tRNA ligase (601 aa).

Belongs to the class-II aminoacyl-tRNA synthetase family. ProS type 1 subfamily. As to quaternary structure, homodimer.

Its subcellular location is the cytoplasm. The catalysed reaction is tRNA(Pro) + L-proline + ATP = L-prolyl-tRNA(Pro) + AMP + diphosphate. Its function is as follows. Catalyzes the attachment of proline to tRNA(Pro) in a two-step reaction: proline is first activated by ATP to form Pro-AMP and then transferred to the acceptor end of tRNA(Pro). As ProRS can inadvertently accommodate and process non-cognate amino acids such as alanine and cysteine, to avoid such errors it has two additional distinct editing activities against alanine. One activity is designated as 'pretransfer' editing and involves the tRNA(Pro)-independent hydrolysis of activated Ala-AMP. The other activity is designated 'posttransfer' editing and involves deacylation of mischarged Ala-tRNA(Pro). The misacylated Cys-tRNA(Pro) is not edited by ProRS. In Trichodesmium erythraeum (strain IMS101), this protein is Proline--tRNA ligase.